Reading from the N-terminus, the 247-residue chain is Phosphoribosylaminoimidazole-succinocarboxamide synthase (247 aa).

Belongs to the SAICAR synthetase family.

It catalyses the reaction 5-amino-1-(5-phospho-D-ribosyl)imidazole-4-carboxylate + L-aspartate + ATP = (2S)-2-[5-amino-1-(5-phospho-beta-D-ribosyl)imidazole-4-carboxamido]succinate + ADP + phosphate + 2 H(+). Its pathway is purine metabolism; IMP biosynthesis via de novo pathway; 5-amino-1-(5-phospho-D-ribosyl)imidazole-4-carboxamide from 5-amino-1-(5-phospho-D-ribosyl)imidazole-4-carboxylate: step 1/2. The polypeptide is Phosphoribosylaminoimidazole-succinocarboxamide synthase (Prochlorococcus marinus (strain NATL1A)).